The chain runs to 223 residues: Ras-related protein Rab-21 (223 aa).

N-acetylalanine is present on Ala-2. Residues Gly-26, Gly-29, Lys-30, Thr-31, Ser-32, Asn-43, Asp-44, His-46, Thr-48, and Thr-49 each contribute to the GTP site. A Mg(2+)-binding site is contributed by Thr-31. The Switch 1 signature appears at 41 to 54 (KFNDKHITTLQASF). The Mg(2+) site is built by Thr-49 and Asp-72. Residues 74–92 (AGQERFHALGPIYYRDSNG) carry the Switch 2 motif. GTP-binding residues include Gly-75, Asn-130, Lys-131, Asp-133, Ala-161, and Lys-162. Residues Cys-219 and Cys-220 are each lipidated (S-geranylgeranyl cysteine). A Cysteine methyl ester modification is found at Cys-220. Residues 221 to 223 (SSG) constitute a propeptide, removed in mature form.

The protein belongs to the small GTPase superfamily. Rab family. In terms of assembly, interacts with the cytoplasmic tail of integrins ITGA1, ITGA2, ITGA5, ITGA6, ITGA11 and ITGB1; this interaction is dependent upon its GDP/GTP cycle. Interacts with RABGEF1 (via VPS9 domain). Interacts with ANKRD27. Interacts (in GTP-bound form) with VAMP8 in response to starvation; the interaction probably regulates VAMP8 endolysosomal trafficking. Interacts (active GTP-bound form) with TMED10; the interaction is indirect and regulates TMED10 abundance and localization at the Golgi. Mg(2+) is required as a cofactor.

Its subcellular location is the endoplasmic reticulum membrane. It localises to the golgi apparatus. The protein resides in the trans-Golgi network. The protein localises to the golgi apparatus membrane. It is found in the early endosome membrane. Its subcellular location is the cytoplasmic vesicle membrane. It localises to the cleavage furrow. The protein resides in the cell projection. The protein localises to the neuron projection. It catalyses the reaction GTP + H2O = GDP + phosphate + H(+). With respect to regulation, regulated by guanine nucleotide exchange factors (GEFs) including ANKRD27 and RABGEF1, which promote the exchange of bound GDP for free GTP. Regulated by GTPase activating proteins (GAPs) which increase the GTP hydrolysis activity. Inhibited by GDP dissociation inhibitors (GDIs). The small GTPases Rab are key regulators of intracellular membrane trafficking, from the formation of transport vesicles to their fusion with membranes. Rabs cycle between an inactive GDP-bound form and an active GTP-bound form that is able to recruit to membranes different sets of downstream effectors directly responsible for vesicle formation, movement, tethering and fusion. RAB21 is involved in membrane trafficking control. Regulates integrin internalization and recycling, but does not influence the traffic of endosomally translocated receptors in general. As a result, may regulate cell adhesion and migration. During the mitosis of adherent cells, controls the endosomal trafficking of integrins which is required for the successful completion of cytokinesis. Involved in neurite growth. Following SBF2/MTMT13-mediated activation in response to starvation-induced autophagy, binds to and regulates SNARE protein VAMP8 endolysosomal transport required for SNARE-mediated autophagosome-lysosome fusion. Modulates protein levels of the cargo receptors TMED2 and TMED10, and required for appropriate Golgi localization of TMED10. In Rattus norvegicus (Rat), this protein is Ras-related protein Rab-21.